The primary structure comprises 462 residues: L-seryl-tRNA(Sec) selenium transferase (462 aa).

K292 carries the N6-(pyridoxal phosphate)lysine modification.

It belongs to the SelA family. Pyridoxal 5'-phosphate serves as cofactor.

Its subcellular location is the cytoplasm. It carries out the reaction L-seryl-tRNA(Sec) + selenophosphate + H(+) = L-selenocysteinyl-tRNA(Sec) + phosphate. Its pathway is aminoacyl-tRNA biosynthesis; selenocysteinyl-tRNA(Sec) biosynthesis; selenocysteinyl-tRNA(Sec) from L-seryl-tRNA(Sec) (bacterial route): step 1/1. Functionally, converts seryl-tRNA(Sec) to selenocysteinyl-tRNA(Sec) required for selenoprotein biosynthesis. The sequence is that of L-seryl-tRNA(Sec) selenium transferase from Clostridium perfringens (strain 13 / Type A).